We begin with the raw amino-acid sequence, 345 residues long: Small ribosomal subunit protein mS45 (345 aa).

Residues 1–27 (MSYGLTGTSSKLRGTSSIFSWTQVRHF) constitute a mitochondrion transit peptide.

The protein belongs to the mitochondrion-specific ribosomal protein mS45 family. As to quaternary structure, component of the mitochondrial small ribosomal subunit (mt-SSU). Mature yeast 74S mitochondrial ribosomes consist of a small (37S) and a large (54S) subunit. The 37S small subunit contains a 15S ribosomal RNA (15S mt-rRNA) and 34 different proteins. The 54S large subunit contains a 21S rRNA (21S mt-rRNA) and 46 different proteins.

Its subcellular location is the mitochondrion. In terms of biological role, component of the mitochondrial ribosome (mitoribosome), a dedicated translation machinery responsible for the synthesis of mitochondrial genome-encoded proteins, including at least some of the essential transmembrane subunits of the mitochondrial respiratory chain. The mitoribosomes are attached to the mitochondrial inner membrane and translation products are cotranslationally integrated into the membrane. In Saccharomyces cerevisiae (strain ATCC 204508 / S288c) (Baker's yeast), this protein is Small ribosomal subunit protein mS45 (MRPS35).